We begin with the raw amino-acid sequence, 240 residues long: 1-(5-phosphoribosyl)-5-[(5-phosphoribosylamino)methylideneamino] imidazole-4-carboxamide isomerase 1 (240 aa).

Aspartate 8 functions as the Proton acceptor in the catalytic mechanism. Aspartate 129 acts as the Proton donor in catalysis.

This sequence belongs to the HisA/HisF family.

It localises to the cytoplasm. It catalyses the reaction 1-(5-phospho-beta-D-ribosyl)-5-[(5-phospho-beta-D-ribosylamino)methylideneamino]imidazole-4-carboxamide = 5-[(5-phospho-1-deoxy-D-ribulos-1-ylimino)methylamino]-1-(5-phospho-beta-D-ribosyl)imidazole-4-carboxamide. Its pathway is amino-acid biosynthesis; L-histidine biosynthesis; L-histidine from 5-phospho-alpha-D-ribose 1-diphosphate: step 4/9. In Ruegeria pomeroyi (strain ATCC 700808 / DSM 15171 / DSS-3) (Silicibacter pomeroyi), this protein is 1-(5-phosphoribosyl)-5-[(5-phosphoribosylamino)methylideneamino] imidazole-4-carboxamide isomerase 1.